The chain runs to 166 residues: Sec-independent protein translocase protein TatB (166 aa).

Residues 2–22 form a helical membrane-spanning segment; that stretch reads FDGIGFMELLLIGVLGLVVLG. The interval 69-166 is disordered; that stretch reads SKGLSNLSPE…DTRSNPKANG (98 aa). 2 stretches are compositionally biased toward polar residues: residues 88 to 97 and 112 to 132; these read QAAQSVNRPY and QIHSPVASTVQTSPAQASQAN. A compositionally biased stretch (low complexity) spans 133-153; it reads PTATVEASPTSASPATPSEPS. Residues 155 to 166 show a composition bias toward polar residues; it reads GADTRSNPKANG.

The protein belongs to the TatB family. In terms of assembly, the Tat system comprises two distinct complexes: a TatABC complex, containing multiple copies of TatA, TatB and TatC subunits, and a separate TatA complex, containing only TatA subunits. Substrates initially bind to the TatABC complex, which probably triggers association of the separate TatA complex to form the active translocon.

Its subcellular location is the cell inner membrane. Part of the twin-arginine translocation (Tat) system that transports large folded proteins containing a characteristic twin-arginine motif in their signal peptide across membranes. Together with TatC, TatB is part of a receptor directly interacting with Tat signal peptides. TatB may form an oligomeric binding site that transiently accommodates folded Tat precursor proteins before their translocation. The polypeptide is Sec-independent protein translocase protein TatB (Shewanella baltica (strain OS223)).